Reading from the N-terminus, the 610-residue chain is Glutamine--fructose-6-phosphate aminotransferase [isomerizing] (610 aa).

Cys2 serves as the catalytic Nucleophile; for GATase activity. The 220-residue stretch at 2-221 (CGIVGAVAQR…DGDVVDLQLA (220 aa)) folds into the Glutamine amidotransferase type-2 domain. 2 consecutive SIS domains span residues 286-426 (AYKV…TRGR) and 459-600 (WADR…VDKP). The For Fru-6P isomerization activity role is filled by Lys605.

In terms of assembly, homodimer.

Its subcellular location is the cytoplasm. The catalysed reaction is D-fructose 6-phosphate + L-glutamine = D-glucosamine 6-phosphate + L-glutamate. Catalyzes the first step in hexosamine metabolism, converting fructose-6P into glucosamine-6P using glutamine as a nitrogen source. The sequence is that of Glutamine--fructose-6-phosphate aminotransferase [isomerizing] from Bordetella bronchiseptica (strain ATCC BAA-588 / NCTC 13252 / RB50) (Alcaligenes bronchisepticus).